The sequence spans 305 residues: Chromatin modification-related protein png2 (305 aa).

The disordered stretch occupies residues 135 to 239 (TVTPQTSERR…PLVKHDTLDS (105 aa)). Over residues 153 to 167 (NQHSQQYSSQERSSS) the composition is skewed to low complexity. Composition is skewed to polar residues over residues 168-183 (YNNF…SYHT) and 195-210 (KSSS…APQS). Residue Y181 is modified to Phosphotyrosine. T183 is modified (phosphothreonine). 2 positions are modified to phosphoserine: S197 and S198. The segment covering 211–223 (TERRPVRRSESRL) has biased composition (basic and acidic residues). A PHD-type zinc finger spans residues 248–297 (QLYCYCQQVSYGQMIGCDNENCKREWFHLPCVGLVEPPKGIWYCKECEEL). Zn(2+)-binding residues include C251, C253, C264, C269, H275, C278, C291, and C294.

This sequence belongs to the ING family. As to quaternary structure, interacts with H3K4me3 and to a lesser extent with H3K4me2. Component of the clr6 histone deacetylase complex I'composed of at least clr6, png2, prw1, pst1 and sds3.

It localises to the cytoplasm. The protein localises to the nucleus. Functionally, component of the clr6 histone deacetylase complex I' responsible for the deacetylation of lysine residues on the N-terminal part of the core histones (H2A, H2B, H3 and H4). Histone deacetylation gives a tag for epigenetic repression and plays an important role in transcriptional regulation, cell cycle progression and developmental events. Has a role in silencing of mating type genes. This chain is Chromatin modification-related protein png2 (png2), found in Schizosaccharomyces pombe (strain 972 / ATCC 24843) (Fission yeast).